The chain runs to 199 residues: Octanoyltransferase (199 aa).

In terms of domain architecture, BPL/LPL catalytic spans 27 to 199; it reads SNSCDELWLL…FVQYFLTQFK (173 aa). Residues 66 to 73, 133 to 135, and 146 to 148 each bind substrate; these read RGGQVTYH, SIG, and GIA. Cys164 (acyl-thioester intermediate) is an active-site residue.

This sequence belongs to the LipB family.

Its subcellular location is the cytoplasm. It catalyses the reaction octanoyl-[ACP] + L-lysyl-[protein] = N(6)-octanoyl-L-lysyl-[protein] + holo-[ACP] + H(+). It functions in the pathway protein modification; protein lipoylation via endogenous pathway; protein N(6)-(lipoyl)lysine from octanoyl-[acyl-carrier-protein]: step 1/2. In terms of biological role, catalyzes the transfer of endogenously produced octanoic acid from octanoyl-acyl-carrier-protein onto the lipoyl domains of lipoate-dependent enzymes. Lipoyl-ACP can also act as a substrate although octanoyl-ACP is likely to be the physiological substrate. In Legionella pneumophila (strain Corby), this protein is Octanoyltransferase.